Reading from the N-terminus, the 190-residue chain is Putative manganese efflux pump MntP (190 aa).

Transmembrane regions (helical) follow at residues Leu-37–Ile-57, Leu-64–Ala-84, Leu-111–Val-131, Ile-135–Trp-155, and Phe-164–Leu-184.

The protein belongs to the MntP (TC 9.B.29) family.

It is found in the cell membrane. Probably functions as a manganese efflux pump. The protein is Putative manganese efflux pump MntP of Corynebacterium efficiens (strain DSM 44549 / YS-314 / AJ 12310 / JCM 11189 / NBRC 100395).